The sequence spans 368 residues: F-box only protein 28 (368 aa).

Residues Met1–Glu11 are compositionally biased toward basic and acidic residues. Residues Met1 to Asp56 form a disordered region. The span at Glu12–Gly21 shows a compositional bias: gly residues. A compositionally biased stretch (low complexity) spans Ser22 to Arg31. The span at Gln32–Pro41 shows a compositional bias: pro residues. Residues Gln42–Asp56 show a composition bias toward low complexity. The 49-residue stretch at Asn61–Val109 folds into the F-box domain. Ser235 and Ser242 each carry phosphoserine. Thr270 is modified (phosphothreonine). The interval Met328–Lys368 is disordered. The segment covering Gly333 to Glu342 has biased composition (low complexity). The residue at position 344 (Ser344) is a Phosphoserine.

In terms of assembly, part of a SCF (SKP1-cullin-F-box) protein ligase complex.

Its subcellular location is the chromosome. It is found in the centromere. The protein resides in the kinetochore. Functionally, probably recognizes and binds to some phosphorylated proteins and promotes their ubiquitination and degradation. The chain is F-box only protein 28 (FBXO28) from Homo sapiens (Human).